The following is a 508-amino-acid chain: tRNA-2-methylthio-N(6)-dimethylallyladenosine synthase (508 aa).

Residues 1–21 (MNEEQRKASGQVSSSDKKSEK) form a disordered region. The region spanning 65–183 (RKFYIRTYGC…LPELLSECYL (119 aa)) is the MTTase N-terminal domain. Cys74, Cys110, Cys144, Cys220, Cys224, and Cys227 together coordinate [4Fe-4S] cluster. Positions 206–436 (RQGKIKGWVN…NALVNEISAK (231 aa)) constitute a Radical SAM core domain. Positions 439-502 (KEYEGQTVEV…TWSLDGEMVG (64 aa)) constitute a TRAM domain.

It belongs to the methylthiotransferase family. MiaB subfamily. As to quaternary structure, monomer. [4Fe-4S] cluster is required as a cofactor.

It is found in the cytoplasm. It catalyses the reaction N(6)-dimethylallyladenosine(37) in tRNA + (sulfur carrier)-SH + AH2 + 2 S-adenosyl-L-methionine = 2-methylsulfanyl-N(6)-dimethylallyladenosine(37) in tRNA + (sulfur carrier)-H + 5'-deoxyadenosine + L-methionine + A + S-adenosyl-L-homocysteine + 2 H(+). Functionally, catalyzes the methylthiolation of N6-(dimethylallyl)adenosine (i(6)A), leading to the formation of 2-methylthio-N6-(dimethylallyl)adenosine (ms(2)i(6)A) at position 37 in tRNAs that read codons beginning with uridine. In Bacillus pumilus (strain SAFR-032), this protein is tRNA-2-methylthio-N(6)-dimethylallyladenosine synthase.